A 396-amino-acid polypeptide reads, in one-letter code: L-lactate dehydrogenase (396 aa).

The region spanning 1–380 is the FMN hydroxy acid dehydrogenase domain; the sequence is MIISAASDYR…TQDSLVQGLG (380 aa). Residue Tyr24 coordinates substrate. Positions 106 and 127 each coordinate FMN. Tyr129 is a binding site for substrate. FMN is bound at residue Thr155. Arg164 is a substrate binding site. Residue Lys251 coordinates FMN. Residue His275 is the Proton acceptor of the active site. Arg278 is a substrate binding site. 306-330 provides a ligand contact to FMN; that stretch reads DSGIRNGLDVVRMIALGADTVLLGR.

The protein belongs to the FMN-dependent alpha-hydroxy acid dehydrogenase family. FMN serves as cofactor.

It is found in the cell inner membrane. It carries out the reaction (S)-lactate + A = pyruvate + AH2. In terms of biological role, catalyzes the conversion of L-lactate to pyruvate. Is coupled to the respiratory chain. In Shigella boydii serotype 4 (strain Sb227), this protein is L-lactate dehydrogenase.